An 83-amino-acid polypeptide reads, in one-letter code: Small ribosomal subunit protein bS18 (83 aa).

Belongs to the bacterial ribosomal protein bS18 family. Part of the 30S ribosomal subunit. Forms a tight heterodimer with protein bS6.

Functionally, binds as a heterodimer with protein bS6 to the central domain of the 16S rRNA, where it helps stabilize the platform of the 30S subunit. This chain is Small ribosomal subunit protein bS18, found in Desulfosudis oleivorans (strain DSM 6200 / JCM 39069 / Hxd3) (Desulfococcus oleovorans).